A 748-amino-acid polypeptide reads, in one-letter code: MKIRLYGETMVVGNIIEGGKTVLNLTKEILEKEDENLKVSYPGTNYNLPIIYGLLGKKIETVKDLKELINSLEIKDEETLENALDAGVVTLICAEAIEALKYAKSEKPYKEPYVGFIPDEILRGLGVPLVEGKIPAILVVIGKVGDKEKLKKLIDDIKKRNILALLVGDIVKEMDEADIEYGLDKLLVPVGNEITSAIHAANLAIRAPLIFGGIEPGKTEEIIDYLKNRVPAVVVALGELDNITLAAGAGCIKAGVPVITNNEVPVIKGALESSDIDNIVENALKMKGVKVKVVEFDIPVSVGPMNEGERVRGPDMYVELAGPKSYGFELVKVVNKAEDKVEIIGKDIDEMEEGSRNPFAIIVEVSGSNLEEDLEGVLERRIHEFLNYIEGVMHLNQRDQVWIRINKNSFNKGLRLKHIGEVVKQLFKEHFPIVEKCNVIIITDPDKVKEELEKAKEIYKKRDEKTKSIREEDVDVFYGCVMCQSFAPTHVCIITPDRPSLCGSINYLDARAAAKIDPNGPIFEIPKGECLDEKLGIYTGVNEVVRERSQGSVEEMALHSALTNPCTSCGCFEAIVFYIPEVDGFGVAHRNFRGETPFGLPFSTLAGQCSGGKQVPGFVGISISYMKSPKFLQGDGGWERVVWLPKELKERVKDAIPEELYDKIATEEDVKTTDELIKFLKEKGHPIVKKTEEEVVEEVEEEKEEVKATEEEKEGIEVGELITKLAKEGGIQIIMKNVKIVINLNVKR.

Positions 480, 483, 569, and 571 each coordinate [Ni-Fe-S] cluster.

Belongs to the CdhC family. Monomer. The ACDS complex is made up of alpha, epsilon, beta, gamma and delta chains with a probable stoichiometry of (alpha(2)epsilon(2))(4)-beta(8)-(gamma(1)delta(1))(8) (Potential). It depends on [Ni-Fe-S] cluster as a cofactor.

It catalyses the reaction Co(I)-[corrinoid Fe-S protein] + acetyl-CoA + H(+) = methyl-Co(III)-[corrinoid Fe-S protein] + CO + CoA. Functionally, part of a complex that catalyzes the reversible cleavage of acetyl-CoA, allowing autotrophic growth from CO(2). The alpha-epsilon complex generates CO from CO(2), while the beta subunit (this protein) combines the CO with CoA and a methyl group to form acetyl-CoA. The methyl group, which is incorporated into acetyl-CoA, is transferred to the beta subunit by a corrinoid iron-sulfur protein (the gamma-delta complex). The polypeptide is Acetyl-CoA decarbonylase/synthase complex subunit beta 1 (cdhC1) (Methanocaldococcus jannaschii (strain ATCC 43067 / DSM 2661 / JAL-1 / JCM 10045 / NBRC 100440) (Methanococcus jannaschii)).